The sequence spans 1310 residues: Cadherin-related family member 2 (1310 aa).

The signal sequence occupies residues 1-20 (MAQLWLSCFLLPALVVSVAA). The Extracellular portion of the chain corresponds to 21 to 1154 (NVAPKFLANM…ESDLSKQLIS (1134 aa)). Cadherin domains are found at residues 27–124 (LANM…APVF), 125–241 (QNTA…DPQF), and 242–353 (VREF…KPEF). Residues N29, N134, N182, N188, N195, N300, N355, N371, N401, N460, N565, N600, N616, N632, N680, N696, N701, N775, N821, N871, N877, N911, N932, and N1107 are each glycosylated (N-linked (GlcNAc...) asparagine). Cadherin domains follow at residues 368–480 (AQVN…RPTF), 481–586 (PQSL…APVV), 586–695 (VSGS…LPIF), 696–808 (NQSS…PPTL), 810–928 (VASL…APYF), and 930–1058 (PENK…TPKE). Residues 1155–1175 (VIIGLGVALLLVLVIMTMAFV) form a helical membrane-spanning segment. Over 1176–1310 (CVRKSYNRKL…TNAGLDTTDL (135 aa)) the chain is Cytoplasmic. Residues 1180-1310 (SYNRKLQAMK…TNAGLDTTDL (131 aa)) are mediates interaction with USH1C and MYO7B and is required for proper localization to microvilli tips and function in microvilli organization. Residue S1248 is modified to Phosphoserine. Residues 1259–1268 (NSQEIKEHRP) are compositionally biased toward basic and acidic residues. The interval 1259 to 1310 (NSQEIKEHRPPHTPPEPDPEPLSVVLLGRQAGASGQLEGPSYTNAGLDTTDL) is disordered. S1299 is subject to Phosphoserine. The span at 1299–1310 (SYTNAGLDTTDL) shows a compositional bias: polar residues.

As to quaternary structure, part of the IMAC/intermicrovillar adhesion complex/intermicrovillar tip-link complex composed of ANKS4B, MYO7B, USH1C, CDHR2 and CDHR5. Interacts with MAST2. Interacts (via cytoplasmic domain) with USH1C and MYO7B; required for proper localization of CDHR2 to microvilli tips and its function in brush border differentiation. In terms of tissue distribution, highly expressed in liver, kidney and colon. Moderately expressed in small intestine. Down-regulated in a number of liver and colon cancers. Expressed in duodenum with higher expression in enterocytes along the villus axis and lower expression in crypts (at protein level).

It localises to the apical cell membrane. Its subcellular location is the cell projection. The protein localises to the microvillus membrane. The protein resides in the cell junction. Intermicrovillar adhesion molecule that forms, via its extracellular domain, calcium-dependent heterophilic complexes with CDHR5 on adjacent microvilli. Thereby, controls the packing of microvilli at the apical membrane of epithelial cells. Through its cytoplasmic domain, interacts with microvillus cytoplasmic proteins to form the intermicrovillar adhesion complex/IMAC. This complex plays a central role in microvilli and epithelial brush border differentiation. May also play a role in cell-cell adhesion and contact inhibition in epithelial cells. In Homo sapiens (Human), this protein is Cadherin-related family member 2.